Reading from the N-terminus, the 342-residue chain is Dihydroorotase (342 aa).

Histidine 13 and histidine 15 together coordinate Zn(2+). Substrate-binding positions include 15 to 17 (HLR) and asparagine 41. Lysine 98, histidine 135, and histidine 173 together coordinate Zn(2+). Lysine 98 carries the N6-carboxylysine modification. Histidine 135 contacts substrate. Leucine 218 is a substrate binding site. Aspartate 246 is a Zn(2+) binding site. The active site involves aspartate 246. Substrate-binding residues include histidine 250 and alanine 262.

It belongs to the metallo-dependent hydrolases superfamily. DHOase family. Class II DHOase subfamily. In terms of assembly, homodimer. It depends on Zn(2+) as a cofactor.

The enzyme catalyses (S)-dihydroorotate + H2O = N-carbamoyl-L-aspartate + H(+). Its pathway is pyrimidine metabolism; UMP biosynthesis via de novo pathway; (S)-dihydroorotate from bicarbonate: step 3/3. Its function is as follows. Catalyzes the reversible cyclization of carbamoyl aspartate to dihydroorotate. This chain is Dihydroorotase, found in Vibrio vulnificus (strain YJ016).